A 485-amino-acid polypeptide reads, in one-letter code: NADH-quinone oxidoreductase subunit N (485 aa).

The next 14 helical transmembrane spans lie at 8 to 28 (LIALLPLLIVGLTVVVVMLSI), 35 to 55 (FLNATLSVLGLNAALVSLWFV), 75 to 95 (LYTGLVLLASLATCTFAYPWL), 105 to 125 (FYLLVLIAALGGILLAGANHL), 127 to 147 (ALFLGIELISLPLFGLVGYAF), 159 to 179 (YTILSAAASSFLLFGMALVYA), 203 to 223 (LLAGLGLMIVGLGFKLSLVPF), 235 to 255 (PAPVSTFLATASKIAIFGVVM), 271 to 291 (VVLGLIAFASIIFGNLMALSQ), 297 to 317 (LLGYSSISHLGYLLVALIALQ), 326 to 346 (VGVYLAGYLFSSLGAFGVVSL), 374 to 394 (AVMTVMMLSLAGIPMTLGFIG), 408 to 430 (WWLVAAVVVGSAIGLYYYLRVAV), and 455 to 475 (IVVLISALLVLVLGIWPQPLI).

This sequence belongs to the complex I subunit 2 family. In terms of assembly, NDH-1 is composed of 13 different subunits. Subunits NuoA, H, J, K, L, M, N constitute the membrane sector of the complex.

It is found in the cell inner membrane. It carries out the reaction a quinone + NADH + 5 H(+)(in) = a quinol + NAD(+) + 4 H(+)(out). NDH-1 shuttles electrons from NADH, via FMN and iron-sulfur (Fe-S) centers, to quinones in the respiratory chain. The immediate electron acceptor for the enzyme in this species is believed to be ubiquinone. Couples the redox reaction to proton translocation (for every two electrons transferred, four hydrogen ions are translocated across the cytoplasmic membrane), and thus conserves the redox energy in a proton gradient. The polypeptide is NADH-quinone oxidoreductase subunit N (Klebsiella pneumoniae subsp. pneumoniae (strain ATCC 700721 / MGH 78578)).